Reading from the N-terminus, the 462-residue chain is 3-ketoacyl CoA thiolase 1, peroxisomal (462 aa).

The N-terminal 34 residues, 1 to 34 (MEKAIQRQRVLLEHLQPIRHHTHDHSSSLTTSIC), are a transit peptide targeting the peroxisome. Cys138 serves as the catalytic Acyl-thioester intermediate. Residues His393 and Cys425 each act as proton acceptor in the active site. Gly427 contacts substrate.

It belongs to the thiolase-like superfamily. Thiolase family. Homodimer.

The protein localises to the peroxisome. The enzyme catalyses an acyl-CoA + acetyl-CoA = a 3-oxoacyl-CoA + CoA. It functions in the pathway aromatic compound metabolism. It participates in lipid metabolism; fatty acid metabolism. Its function is as follows. Component of the floral volatile benzenoid/phenylpropanoid (FVBP) biosynthetic pathway. Thiolase that catalyzes the conversion of 3-oxo-3-phenylpropionyl-CoA (benzoylacetyl-CoA) to benzoyl-CoA. This Petunia hybrida (Petunia) protein is 3-ketoacyl CoA thiolase 1, peroxisomal.